We begin with the raw amino-acid sequence, 581 residues long: Multidrug resistance-like ATP-binding protein MdlA (581 aa).

Residues 18-303 form the ABC transmembrane type-1 domain; the sequence is YLGSIILLII…LAWMFNIVER (286 aa). Transmembrane regions (helical) follow at residues 23-43, 53-73, 127-149, 153-175, 247-267, and 280-300; these read ILLIIIAFLQLLPPKIIGILI, GFEILPWISIILLIAIIVYIL, VVFAAGEGVLTLVDSSVMGISVL, ITQISWLLTIISLIPMPIMAILI, VIYLSVAFSNLLAITAGGWLV, and FIMYLGLMIWPMLALAWMFNI. The 235-residue stretch at 337-571 folds into the ABC transporter domain; sequence INIDMFFYPK…KNWYKSMYDH (235 aa). ATP is bound at residue 369-376; sequence GPTGAGKS.

This sequence belongs to the ABC transporter superfamily. Drug exporter-2 (TC 3.A.1.117) family.

Its subcellular location is the cell membrane. It carries out the reaction ATP + H2O + xenobioticSide 1 = ADP + phosphate + xenobioticSide 2.. This chain is Multidrug resistance-like ATP-binding protein MdlA (mdlA), found in Buchnera aphidicola subsp. Schizaphis graminum (strain Sg).